Reading from the N-terminus, the 120-residue chain is Dihydroneopterin triphosphate 2'-epimerase (120 aa).

The protein belongs to the DHNA family. Homooctamer.

It carries out the reaction 7,8-dihydroneopterin 3'-triphosphate = 7,8-dihydromonapterin 3'-triphosphate. Its function is as follows. Catalyzes the epimerization of carbon 2' of the side chain of 7,8-dihydroneopterin triphosphate (H2NTP) to form 7,8-dihydromonapterin triphosphate (H2MTP). Is required for tetrahydromonapterin biosynthesis. This is Dihydroneopterin triphosphate 2'-epimerase (folX) from Escherichia coli O157:H7.